Consider the following 408-residue polypeptide: Lysosomal phospholipase A and acyltransferase (408 aa).

The first 31 residues, 1–31 (MGLRRGPCPAALLPGGFLFLLLLADPALLAG), serve as a signal peptide directing secretion. Aspartate 42 provides a ligand contact to substrate. Cysteines 61 and 85 form a disulfide. A glycan (N-linked (GlcNAc...) asparagine) is linked at asparagine 95. The active-site Acyl-ester intermediate is serine 194. Serine 194 contacts Zn(2+). Methionine 195 is a substrate binding site. N-linked (GlcNAc...) asparagine glycans are attached at residues asparagine 269 and asparagine 285. Residues aspartate 336 and cysteine 351 each coordinate Zn(2+). Catalysis depends on charge relay system residues aspartate 356 and histidine 388. Position 388 (histidine 388) interacts with Zn(2+). A glycan (N-linked (GlcNAc...) asparagine) is linked at asparagine 394.

It belongs to the AB hydrolase superfamily. Lipase family. N-glycosylated. N-glycosylation is important for maturation of the enzyme and normal subcellular location.

The protein localises to the secreted. The protein resides in the lysosome. Its subcellular location is the membrane. It carries out the reaction a 1,2-diacyl-sn-glycero-3-phosphocholine + H2O = a 2-acyl-sn-glycero-3-phosphocholine + a fatty acid + H(+). The enzyme catalyses 1-hexadecanoyl-2-(9Z-octadecenoyl)-sn-glycero-3-phosphocholine + H2O = 2-(9Z-octadecenoyl)-sn-glycero-3-phosphocholine + hexadecanoate + H(+). The catalysed reaction is 1,2-di-(9Z-octadecenoyl)-sn-glycero-3-phosphocholine + H2O = 2-(9Z-octadecenoyl)-sn-glycero-3-phosphocholine + (9Z)-octadecenoate + H(+). It catalyses the reaction 1-hexadecanoyl-2-glutaroyl-sn-glycero-3-phosphocholine + H2O = 2-glutaroyl-sn-glycero-3-phosphocholine + hexadecanoate + H(+). It carries out the reaction 1-hexadecanoyl-2-nonadioyl-sn-glycero-3-phosphocholine + H2O = 2-nonadioyl-sn-glycero-3-phosphocholine + hexadecanoate + H(+). The enzyme catalyses 1-hexadecanoyl-2-(5-oxopentanoyl)-sn-glycero-3-phosphocholine + H2O = 2-(5-oxopentanoyl)-sn-glycero-3-phosphocholine + hexadecanoate + H(+). The catalysed reaction is 1-hexadecanoyl-2-(9-oxononanoyl)-sn-glycero-3-phosphocholine + H2O = 2-(9-oxononanoyl)-sn-glycero-3-phosphocholine + hexadecanoate + H(+). It catalyses the reaction 1,2-dihexadecanoyl-sn-glycero-3-phosphocholine + H2O = 2-hexadecanoyl-sn-glycero-3-phosphocholine + hexadecanoate + H(+). It carries out the reaction a 1,2-diacyl-sn-glycero-3-phosphocholine + H2O = a 1-acyl-sn-glycero-3-phosphocholine + a fatty acid + H(+). The enzyme catalyses 1-hexadecanoyl-2-(9Z-octadecenoyl)-sn-glycero-3-phosphocholine + H2O = 1-hexadecanoyl-sn-glycero-3-phosphocholine + (9Z)-octadecenoate + H(+). The catalysed reaction is 1,2-di-(9Z-octadecenoyl)-sn-glycero-3-phosphocholine + H2O = 1-(9Z-octadecenoyl)-sn-glycero-3-phosphocholine + (9Z)-octadecenoate + H(+). It catalyses the reaction 1,2-dihexadecanoyl-sn-glycero-3-phosphocholine + H2O = 1-hexadecanoyl-sn-glycero-3-phosphocholine + hexadecanoate + H(+). It carries out the reaction a 1-acyl-sn-glycero-3-phosphocholine + H2O = sn-glycerol 3-phosphocholine + a fatty acid + H(+). The enzyme catalyses 1-hexadecanoyl-sn-glycero-3-phosphocholine + H2O = sn-glycerol 3-phosphocholine + hexadecanoate + H(+). The catalysed reaction is N-(acetyl)-sphing-4-enine + a 1,2-diacyl-sn-glycero-3-phosphoethanolamine = 1-O-acyl-N-(acetyl)-sphing-4-enine + a 2-acyl-sn-glycero-3-phosphoethanolamine. It catalyses the reaction 1-hexadecanoyl-2-(9Z-octadecenoyl)-sn-glycero-3-phosphoethanolamine + N-(acetyl)-sphing-4-enine = 2-(9Z-octadecenoyl)-sn-glycero-3-phosphoethanolamine + 1-hexadecanoyl-N-(acetyl)-sphing-4-enine. It carries out the reaction 1-hexadecanoyl-2-(9Z,12Z-octadecadienoyl)-sn-glycero-3-phosphoethanolamine + N-(acetyl)-sphing-4-enine = 2-(9Z,12Z)-octadecadienoyl-sn-glycero-3-phosphoethanolamine + 1-hexadecanoyl-N-(acetyl)-sphing-4-enine. The enzyme catalyses 1-hexadecanoyl-2-(5Z,8Z,11Z,14Z-eicosatetraenoyl)-sn-glycero-3-phosphoethanolamine + N-(acetyl)-sphing-4-enine = 2-(5Z,8Z,11Z,14Z)-eicosatetraenoyl-sn-glycero-3-phosphoethanolamine + 1-hexadecanoyl-N-(acetyl)-sphing-4-enine. The catalysed reaction is N-(acetyl)-sphing-4-enine + a 1,2-diacyl-sn-glycero-3-phosphoethanolamine = 1-O-acyl-N-(acetyl)-sphing-4-enine + a 1-acyl-sn-glycero-3-phosphoethanolamine. It catalyses the reaction 1-hexadecanoyl-2-(9Z-octadecenoyl)-sn-glycero-3-phosphoethanolamine + N-(acetyl)-sphing-4-enine = 1-(9Z-octadecenoyl)-N-(acetyl)-sphing-4-enine + 1-hexadecanoyl-sn-glycero-3-phosphoethanolamine. It carries out the reaction 1-hexadecanoyl-2-(9Z,12Z-octadecadienoyl)-sn-glycero-3-phosphoethanolamine + N-(acetyl)-sphing-4-enine = 1-(9Z,12Z-octadecadienoyl)-N-acetylsphing-4-enine + 1-hexadecanoyl-sn-glycero-3-phosphoethanolamine. The enzyme catalyses 1-hexadecanoyl-2-(5Z,8Z,11Z,14Z-eicosatetraenoyl)-sn-glycero-3-phosphoethanolamine + N-(acetyl)-sphing-4-enine = 1-(5Z,8Z,11Z,14Z)-eicosatetraenoyl-N-(acetyl)-sphing-4-enine + 1-hexadecanoyl-sn-glycero-3-phosphoethanolamine. The catalysed reaction is N-(acetyl)-sphing-4-enine + a 1,2-diacyl-sn-glycero-3-phosphocholine = 1-O-acyl-N-(acetyl)-sphing-4-enine + a 2-acyl-sn-glycero-3-phosphocholine. It catalyses the reaction 1-hexadecanoyl-2-(9Z-octadecenoyl)-sn-glycero-3-phosphocholine + N-(acetyl)-sphing-4-enine = 1-hexadecanoyl-N-(acetyl)-sphing-4-enine + 2-(9Z-octadecenoyl)-sn-glycero-3-phosphocholine. It carries out the reaction 1-hexadecanoyl-2-(9Z,12Z-octadecadienoyl)-sn-glycero-3-phosphocholine + N-(acetyl)-sphing-4-enine = 2-(9Z,12Z-octadecadienoyl)-sn-glycero-3-phosphocholine + 1-hexadecanoyl-N-(acetyl)-sphing-4-enine. The enzyme catalyses 1-hexadecanoyl-2-(5Z,8Z,11Z,14Z-eicosatetraenoyl)-sn-glycero-3-phosphocholine + N-(acetyl)-sphing-4-enine = 1-hexadecanoyl-N-(acetyl)-sphing-4-enine + 2-(5Z,8Z,11Z,14Z)-eicosatetraenoyl-sn-glycero-3-phosphocholine. The catalysed reaction is 1-hexadecanoyl-2-(4Z,7Z,10Z,13Z,16Z,19Z-docosahexaenoyl)-sn-glycero-3-phosphocholine + N-(acetyl)-sphing-4-enine = 2-(4Z,7Z,10Z,13Z,16Z,19Z-docosahexaenoyl)-sn-glycero-3-phosphocholine + 1-hexadecanoyl-N-(acetyl)-sphing-4-enine. It catalyses the reaction 1-hexadecanoyl-2-nonadioyl-sn-glycero-3-phosphocholine + N-(acetyl)-sphing-4-enine = 2-nonadioyl-sn-glycero-3-phosphocholine + 1-hexadecanoyl-N-(acetyl)-sphing-4-enine. It carries out the reaction 1-octadecanoyl-2-(9Z-octadecenoyl)-sn-glycero-3-phosphocholine + N-(acetyl)-sphing-4-enine = 1-octadecanoyl-N-(acetyl)-sphing-4-enine + 2-(9Z-octadecenoyl)-sn-glycero-3-phosphocholine. The enzyme catalyses 1-(9Z)-octadecenoyl-2-octadecanoyl-sn-glycero-3-phosphocholine + N-(acetyl)-sphing-4-enine = 2-octadecanoyl-sn-glycero-3-phosphocholine + 1-(9Z-octadecenoyl)-N-(acetyl)-sphing-4-enine. The catalysed reaction is 1-octadecanoyl-2-(5Z,8Z,11Z,14Z-eicosatetraenoyl)-sn-glycero-3-phosphocholine + N-(acetyl)-sphing-4-enine = 1-octadecanoyl-N-(acetyl)-sphing-4-enine + 2-(5Z,8Z,11Z,14Z)-eicosatetraenoyl-sn-glycero-3-phosphocholine. It catalyses the reaction 1-(9Z-octadecenoyl)-2-hexadecanoyl-sn-glycero-3-phosphocholine + N-(acetyl)-sphing-4-enine = 1-(9Z-octadecenoyl)-N-(acetyl)-sphing-4-enine + 2-hexadecanoyl-sn-glycero-3-phosphocholine. It carries out the reaction N-(acetyl)-sphing-4-enine + a 1,2-diacyl-sn-glycero-3-phosphocholine = 1-O-acyl-N-(acetyl)-sphing-4-enine + a 1-acyl-sn-glycero-3-phosphocholine. The enzyme catalyses 1-hexadecanoyl-2-(9Z-octadecenoyl)-sn-glycero-3-phosphocholine + N-(acetyl)-sphing-4-enine = 1-(9Z-octadecenoyl)-N-(acetyl)-sphing-4-enine + 1-hexadecanoyl-sn-glycero-3-phosphocholine. The catalysed reaction is 1-hexadecanoyl-2-(9Z,12Z-octadecadienoyl)-sn-glycero-3-phosphocholine + N-(acetyl)-sphing-4-enine = 1-(9Z,12Z-octadecadienoyl)-N-acetylsphing-4-enine + 1-hexadecanoyl-sn-glycero-3-phosphocholine. It catalyses the reaction 1-hexadecanoyl-2-(5Z,8Z,11Z,14Z-eicosatetraenoyl)-sn-glycero-3-phosphocholine + N-(acetyl)-sphing-4-enine = 1-(5Z,8Z,11Z,14Z)-eicosatetraenoyl-N-(acetyl)-sphing-4-enine + 1-hexadecanoyl-sn-glycero-3-phosphocholine. It carries out the reaction 1-hexadecanoyl-2-(4Z,7Z,10Z,13Z,16Z,19Z-docosahexaenoyl)-sn-glycero-3-phosphocholine + N-(acetyl)-sphing-4-enine = 1-(4Z,7Z,10Z,13Z,16Z,19Z-docosahexaenoyl)-N-(acetyl)-sphing-4-enine + 1-hexadecanoyl-sn-glycero-3-phosphocholine. The enzyme catalyses 1-octadecanoyl-2-(9Z-octadecenoyl)-sn-glycero-3-phosphocholine + N-(acetyl)-sphing-4-enine = 1-(9Z-octadecenoyl)-N-(acetyl)-sphing-4-enine + 1-octadecanoyl-sn-glycero-3-phosphocholine. The catalysed reaction is 1-octadecanoyl-2-(9Z,12Z)-octadecadienoyl-sn-glycero-3-phosphocholine + N-(acetyl)-sphing-4-enine = 1-(9Z,12Z-octadecadienoyl)-N-acetylsphing-4-enine + 1-octadecanoyl-sn-glycero-3-phosphocholine. It catalyses the reaction 1-(9Z-octadecenoyl)-2-hexadecanoyl-sn-glycero-3-phosphocholine + N-(acetyl)-sphing-4-enine = 1-hexadecanoyl-N-(acetyl)-sphing-4-enine + 1-(9Z-octadecenoyl)-sn-glycero-3-phosphocholine. It carries out the reaction 1-(9Z)-octadecenoyl-2-octadecanoyl-sn-glycero-3-phosphocholine + N-(acetyl)-sphing-4-enine = 1-octadecanoyl-N-(acetyl)-sphing-4-enine + 1-(9Z-octadecenoyl)-sn-glycero-3-phosphocholine. The enzyme catalyses 1,2-di-(9Z-octadecenoyl)-sn-glycero-3-phosphocholine + N-(acetyl)-sphing-4-enine = 1-(9Z-octadecenoyl)-N-(acetyl)-sphing-4-enine + 1-(9Z-octadecenoyl)-sn-glycero-3-phosphocholine. The catalysed reaction is 1-octadecanoyl-2-(5Z,8Z,11Z,14Z-eicosatetraenoyl)-sn-glycero-3-phosphocholine + N-(acetyl)-sphing-4-enine = 1-(5Z,8Z,11Z,14Z)-eicosatetraenoyl-N-(acetyl)-sphing-4-enine + 1-octadecanoyl-sn-glycero-3-phosphocholine. It catalyses the reaction a 1,2-diacyl-sn-glycero-3-phospho-L-serine + N-(acetyl)-sphing-4-enine = a 2-acyl-sn-glycero-3-phospho-L-serine + 1-O-acyl-N-(acetyl)-sphing-4-enine. It carries out the reaction 1-octadecanoyl-2-(9Z-octadecenoyl)-sn-glycero-3-phospho-L-serine + N-(acetyl)-sphing-4-enine = 2-(9Z-octadecenoyl)-sn-glycero-3-phospho-L-serine + 1-octadecanoyl-N-(acetyl)-sphing-4-enine. The enzyme catalyses a 1,2-diacyl-sn-glycero-3-phospho-L-serine + N-(acetyl)-sphing-4-enine = 1-O-acyl-N-(acetyl)-sphing-4-enine + a 1-acyl-sn-glycero-3-phospho-L-serine. The catalysed reaction is 1-octadecanoyl-2-(9Z-octadecenoyl)-sn-glycero-3-phospho-L-serine + N-(acetyl)-sphing-4-enine = 1-octadecanoyl-sn-glycero-3-phosphoserine + 1-(9Z-octadecenoyl)-N-(acetyl)-sphing-4-enine. It catalyses the reaction a 1,2-diacyl-sn-glycero-3-phospho-(1'-sn-glycerol) + N-(acetyl)-sphing-4-enine = 2-acyl-sn-glycero-3-phospho-(1'-sn-glycerol) + 1-O-acyl-N-(acetyl)-sphing-4-enine. It carries out the reaction 1-octadecanoyl-2-(9Z-octadecenoyl)-sn-glycero-3-phospho-(1'-sn-glycerol) + N-(acetyl)-sphing-4-enine = 2-(9Z-octadecenoyl)-sn-glycero-3-phospho-(1'-sn-glycerol) + 1-octadecanoyl-N-(acetyl)-sphing-4-enine. The enzyme catalyses a 1,2-diacyl-sn-glycero-3-phospho-(1'-sn-glycerol) + N-(acetyl)-sphing-4-enine = 1-O-acyl-N-(acetyl)-sphing-4-enine + 1-acyl-sn-glycero-3-phospho-(1'-sn-glycerol). The catalysed reaction is 1-octadecanoyl-2-(9Z-octadecenoyl)-sn-glycero-3-phospho-(1'-sn-glycerol) + N-(acetyl)-sphing-4-enine = 1-octadecanoyl-sn-glycero-3-phospho-(1'-sn-glycerol) + 1-(9Z-octadecenoyl)-N-(acetyl)-sphing-4-enine. It catalyses the reaction an N-acylethanolamine + a 1,2-diacyl-sn-glycero-3-phosphocholine = 2-(acylamino)ethyl fatty acid + a 2-acyl-sn-glycero-3-phosphocholine. It carries out the reaction an N-acylethanolamine + a 1,2-diacyl-sn-glycero-3-phosphocholine = 2-(acylamino)ethyl fatty acid + a 1-acyl-sn-glycero-3-phosphocholine. The enzyme catalyses N-(5Z,8Z,11Z,14Z-eicosatetraenoyl)-ethanolamine + 1,2-di-(9Z-octadecenoyl)-sn-glycero-3-phosphocholine = 2-[(5Z,8Z,11Z,14Z)-eicosatetraenoylamino]ethyl (9Z)-octadecenoate + (9Z-octadecenoyl)-sn-glycero-3-phosphocholine. The catalysed reaction is N-(9Z-octadecenoyl) ethanolamine + 1,2-di-(9Z-octadecenoyl)-sn-glycero-3-phosphocholine = 2-[(9Z)-octadecenoylamino]ethyl (9Z)-octadecenoate + (9Z-octadecenoyl)-sn-glycero-3-phosphocholine. It catalyses the reaction a 3-acyl-sn-glycerol + a 1,2-diacyl-sn-glycero-3-phosphocholine = a 1,3-diacylglycerol + a 1-acyl-sn-glycero-3-phosphocholine. It carries out the reaction a 3-acyl-sn-glycerol + a 1,2-diacyl-sn-glycero-3-phosphocholine = a 1,3-diacylglycerol + a 2-acyl-sn-glycero-3-phosphocholine. The enzyme catalyses 3-(9Z-octadecenoyl)-sn-glycerol + 1,2-di-(9Z-octadecenoyl)-sn-glycero-3-phosphocholine = 1,3-di-(9Z-octadecenoyl)-glycerol + (9Z-octadecenoyl)-sn-glycero-3-phosphocholine. The catalysed reaction is 3-hexadecanoyl-sn-glycerol + 1,2-di-(9Z-octadecenoyl)-sn-glycero-3-phosphocholine = 1-(9Z)-octadecenoyl-3-hexadecanoyl-sn-glycerol + (9Z-octadecenoyl)-sn-glycero-3-phosphocholine. It catalyses the reaction a 1-acyl-sn-glycerol + a 1,2-diacyl-sn-glycero-3-phosphocholine = a 1,3-diacylglycerol + a 2-acyl-sn-glycero-3-phosphocholine. It carries out the reaction a 1-acyl-sn-glycerol + a 1,2-diacyl-sn-glycero-3-phosphocholine = a 1,3-diacylglycerol + a 1-acyl-sn-glycero-3-phosphocholine. The enzyme catalyses 1-(9Z-octadecenoyl)-sn-glycerol + 1,2-di-(9Z-octadecenoyl)-sn-glycero-3-phosphocholine = 1,3-di-(9Z-octadecenoyl)-glycerol + (9Z-octadecenoyl)-sn-glycero-3-phosphocholine. The catalysed reaction is 1-hexadecanoyl-sn-glycerol + 1,2-di-(9Z-octadecenoyl)-sn-glycero-3-phosphocholine = 1-hexadecanoyl-3-(9Z)-octadecenoyl-sn-glycerol + (9Z-octadecenoyl)-sn-glycero-3-phosphocholine. It catalyses the reaction a 2-acylglycerol + a 1,2-diacyl-sn-glycero-3-phosphocholine = a 1,2-diacylglycerol + a 2-acyl-sn-glycero-3-phosphocholine. It carries out the reaction a 2-acylglycerol + a 1,2-diacyl-sn-glycero-3-phosphocholine = a 1,2-diacylglycerol + a 1-acyl-sn-glycero-3-phosphocholine. The enzyme catalyses 2-hexadecanoylglycerol + 1,2-di-(9Z-octadecenoyl)-sn-glycero-3-phosphocholine = 1-(9Z)-octadecenoyl-2-hexadecanoylglycerol + (9Z-octadecenoyl)-sn-glycero-3-phosphocholine. The catalysed reaction is 1-O-alkylglycerol + a 1,2-diacyl-sn-glycero-3-phosphocholine = 1-O-alkyl-3-acylglycerol + a 1-acyl-sn-glycero-3-phosphocholine. It catalyses the reaction 1-O-alkylglycerol + a 1,2-diacyl-sn-glycero-3-phosphocholine = 1-O-alkyl-3-acylglycerol + a 2-acyl-sn-glycero-3-phosphocholine. It carries out the reaction 1-O-hexadecylglycerol + 1,2-di-(9Z-octadecenoyl)-sn-glycero-3-phosphocholine = 1-O-hexadecyl-3-(9Z)-octadecenoylglycerol + (9Z-octadecenoyl)-sn-glycero-3-phosphocholine. The enzyme catalyses 1-O-alkyl-2-acyl-sn-glycerol + a 1,2-diacyl-sn-glycero-3-phosphocholine = 1-O-alkyl-2,3-diacyl-sn-glycerol + a 2-acyl-sn-glycero-3-phosphocholine. The catalysed reaction is 1-O-alkyl-2-acyl-sn-glycerol + a 1,2-diacyl-sn-glycero-3-phosphocholine = 1-O-alkyl-2,3-diacyl-sn-glycerol + a 1-acyl-sn-glycero-3-phosphocholine. It catalyses the reaction 1-O-hexadecyl-2-acetyl-sn-glycerol + 1,2-di-(9Z-octadecenoyl)-sn-glycero-3-phosphocholine = 1-O-hexadecyl-2-acetyl-3-(9Z)-octadecenoyl-sn-glycerol + (9Z-octadecenoyl)-sn-glycero-3-phosphocholine. It carries out the reaction 1-O-hexadecyl-2-O-methyl-sn-glycerol + 1,2-di-(9Z-octadecenoyl)-sn-glycero-3-phosphocholine = 1-O-hexadecyl-2-O-methyl-3-(9Z)-octadecenoyl-sn-glycerol + (9Z-octadecenoyl)-sn-glycero-3-phosphocholine. The enzyme catalyses a 1,2-diacyl-sn-glycero-3-phosphoethanolamine + H2O = a 1-acyl-sn-glycero-3-phosphoethanolamine + a fatty acid + H(+). The catalysed reaction is 1-acyl-2-(5Z,8Z,11Z,14Z)-eicosatetraenoyl-sn-glycero-3-phosphoethanolamine + H2O = a 1-acyl-sn-glycero-3-phosphoethanolamine + (5Z,8Z,11Z,14Z)-eicosatetraenoate + H(+). It catalyses the reaction a 1,2-diacyl-sn-glycero-3-phospho-(1'-sn-glycerol) + H2O = 1-acyl-sn-glycero-3-phospho-(1'-sn-glycerol) + a fatty acid + H(+). It carries out the reaction 1-hexadecanoyl-2-(9Z-octadecenoyl)-sn-glycero-3-phospho-(1'-sn-glycerol) + H2O = 1-hexadecanoyl-sn-glycero-3-phospho-(1'-sn-glycerol) + (9Z)-octadecenoate + H(+). The enzyme catalyses a 1,2-diacyl-sn-glycero-3-phospho-(1'-sn-glycerol) + H2O = 2-acyl-sn-glycero-3-phospho-(1'-sn-glycerol) + a fatty acid + H(+). The catalysed reaction is 1-hexadecanoyl-2-(9Z-octadecenoyl)-sn-glycero-3-phospho-(1'-sn-glycerol) + H2O = 2-(9Z-octadecenoyl)-sn-glycero-3-phospho-(1'-sn-glycerol) + hexadecanoate + H(+). Functionally, has dual calcium-independent phospholipase and O-acyltransferase activities with a potential role in glycerophospholipid homeostasis and remodeling of acyl groups of lipophilic alcohols present in acidic cellular compartments. Catalyzes hydrolysis of the ester bond of the fatty acyl group attached at sn-1 or sn-2 position of phospholipids (phospholipase A1 or A2 activity) and transfer it to the hydroxyl group at the first carbon of lipophilic alcohols (O-acyltransferase activity). Among preferred fatty acyl donors are phosphatidylcholines, phosphatidylethanolamines, phosphatidylglycerols and phosphatidylserines. Favors sn-2 over sn-1 deacylation of unsaturated fatty acyl groups of phosphatidylcholines, phosphatidylethanolamines, and phosphatidylglycerols. Among preferred fatty acyl acceptors are natural lipophilic alcohols including short-chain ceramide N-acetyl-sphingosine (C2 ceramide), alkylacylglycerols, monoacylglycerols, and acylethanolamides such as anandamide and oleoylethanolamide. Selectively hydrolyzes the sn-1 fatty acyl group of truncated oxidized phospholipids and may play a role in detoxification of reactive oxidized phospholipids during oxidative stress. Required for normal phospholipid degradation in alveolar macrophages with potential implications in the clearance of pulmonary surfactant, which is mainly composed of dipalmitoylphosphatidylcholine (1,2-dihexadecanoyl-sn-glycero-3-phosphocholine). Involved in the first step of bis(monoacylglycero)phosphate (BMP) de novo synthesis from phosphatidylglycerol (1,2-diacyl-sn-glycero-3-phospho-(1'-sn-glycerol), PG). BMP is an important player in cargo sorting and degradation, regulation of cellular cholesterol levels and intercellular communication. At neutral pH, hydrolyzes the sn-1 fatty acyl group of the lysophosphatidylcholines. The polypeptide is Lysosomal phospholipase A and acyltransferase (PLA2G15) (Canis lupus familiaris (Dog)).